We begin with the raw amino-acid sequence, 226 residues long: Uracil-DNA glycosylase (226 aa).

The active-site Proton acceptor is Asp65.

The protein belongs to the uracil-DNA glycosylase (UDG) superfamily. UNG family.

Its subcellular location is the cytoplasm. The catalysed reaction is Hydrolyzes single-stranded DNA or mismatched double-stranded DNA and polynucleotides, releasing free uracil.. Excises uracil residues from the DNA which can arise as a result of misincorporation of dUMP residues by DNA polymerase or due to deamination of cytosine. The sequence is that of Uracil-DNA glycosylase from Bacillus pumilus (strain SAFR-032).